Reading from the N-terminus, the 448-residue chain is Beta-glucosidase A (448 aa).

Residue Glu166 is the Proton donor of the active site. The active-site Nucleophile is Glu355.

It belongs to the glycosyl hydrolase 1 family.

The enzyme catalyses Hydrolysis of terminal, non-reducing beta-D-glucosyl residues with release of beta-D-glucose.. It functions in the pathway glycan metabolism; cellulose degradation. The polypeptide is Beta-glucosidase A (bglA) (Acetivibrio thermocellus (strain ATCC 27405 / DSM 1237 / JCM 9322 / NBRC 103400 / NCIMB 10682 / NRRL B-4536 / VPI 7372) (Clostridium thermocellum)).